Reading from the N-terminus, the 92-residue chain is Transcription factor PRE5 (92 aa).

Residues 4–59 (RRSRQTSNASRISDDQMIDLVSKLRQFLPEIHERRRSDKVSASKVLQETCNYIRKL) enclose the bHLH domain.

This sequence belongs to the bHLH protein family. As to quaternary structure, interacts with IBH1.

It is found in the nucleus. In terms of biological role, atypical and probable non DNA-binding bHLH transcription factor that integrates multiple signaling pathways to regulate cell elongation and plant development. May have a regulatory role in various aspects of gibberellin-dependent growth and development. This is Transcription factor PRE5 (PRE5) from Arabidopsis thaliana (Mouse-ear cress).